The following is a 506-amino-acid chain: Maturase K (506 aa).

It belongs to the intron maturase 2 family. MatK subfamily.

It localises to the plastid. The protein resides in the chloroplast. Its function is as follows. Usually encoded in the trnK tRNA gene intron. Probably assists in splicing its own and other chloroplast group II introns. The polypeptide is Maturase K (Uncarina grandidieri (Mouse trap tree)).